Consider the following 337-residue polypeptide: Protein ABHD13 (337 aa).

The chain crosses the membrane as a helical; Signal-anchor for type II membrane protein span at residues 30 to 50 (LLALILTFHLYGGFVLLGLIL). Catalysis depends on charge relay system residues Ser193, Asp268, and His298. Asn299 carries an N-linked (GlcNAc...) asparagine glycan.

This sequence belongs to the serine esterase family.

The protein localises to the membrane. The protein is Protein ABHD13 of Danio rerio (Zebrafish).